Here is a 285-residue protein sequence, read N- to C-terminus: UPF0173 metal-dependent hydrolase Pnuc_1524 (285 aa).

The protein belongs to the UPF0173 family.

This chain is UPF0173 metal-dependent hydrolase Pnuc_1524, found in Polynucleobacter asymbioticus (strain DSM 18221 / CIP 109841 / QLW-P1DMWA-1) (Polynucleobacter necessarius subsp. asymbioticus).